Consider the following 316-residue polypeptide: Methionyl-tRNA formyltransferase (316 aa).

A (6S)-5,6,7,8-tetrahydrofolate-binding site is contributed by Ser114–Pro117.

The protein belongs to the Fmt family.

The enzyme catalyses L-methionyl-tRNA(fMet) + (6R)-10-formyltetrahydrofolate = N-formyl-L-methionyl-tRNA(fMet) + (6S)-5,6,7,8-tetrahydrofolate + H(+). Functionally, attaches a formyl group to the free amino group of methionyl-tRNA(fMet). The formyl group appears to play a dual role in the initiator identity of N-formylmethionyl-tRNA by promoting its recognition by IF2 and preventing the misappropriation of this tRNA by the elongation apparatus. The polypeptide is Methionyl-tRNA formyltransferase (Aromatoleum aromaticum (strain DSM 19018 / LMG 30748 / EbN1) (Azoarcus sp. (strain EbN1))).